The primary structure comprises 325 residues: GMP reductase (325 aa).

Cys-173 (thioimidate intermediate) is an active-site residue. Residue 202-225 (IIADGGIHEHGDIAKSIRFGATMV) coordinates NADP(+).

Belongs to the IMPDH/GMPR family. GuaC type 2 subfamily.

It catalyses the reaction IMP + NH4(+) + NADP(+) = GMP + NADPH + 2 H(+). Functionally, catalyzes the irreversible NADPH-dependent deamination of GMP to IMP. It functions in the conversion of nucleobase, nucleoside and nucleotide derivatives of G to A nucleotides, and in maintaining the intracellular balance of A and G nucleotides. This Albidiferax ferrireducens (strain ATCC BAA-621 / DSM 15236 / T118) (Rhodoferax ferrireducens) protein is GMP reductase.